The primary structure comprises 247 residues: Carboxy-S-adenosyl-L-methionine synthase (247 aa).

S-adenosyl-L-methionine-binding positions include Tyr-40, 65 to 67 (GCS), 90 to 91 (DN), 122 to 123 (DI), Asn-137, and Arg-204.

This sequence belongs to the class I-like SAM-binding methyltransferase superfamily. Cx-SAM synthase family. Homodimer.

It catalyses the reaction prephenate + S-adenosyl-L-methionine = carboxy-S-adenosyl-L-methionine + 3-phenylpyruvate + H2O. Catalyzes the conversion of S-adenosyl-L-methionine (SAM) to carboxy-S-adenosyl-L-methionine (Cx-SAM). This is Carboxy-S-adenosyl-L-methionine synthase from Pseudomonas syringae pv. tomato (strain ATCC BAA-871 / DC3000).